The chain runs to 294 residues: 4-hydroxy-tetrahydrodipicolinate synthase (294 aa).

Residue T44 coordinates pyruvate. Y132 functions as the Proton donor/acceptor in the catalytic mechanism. K161 functions as the Schiff-base intermediate with substrate in the catalytic mechanism. I206 contributes to the pyruvate binding site.

This sequence belongs to the DapA family. As to quaternary structure, homotetramer; dimer of dimers.

The protein localises to the cytoplasm. It carries out the reaction L-aspartate 4-semialdehyde + pyruvate = (2S,4S)-4-hydroxy-2,3,4,5-tetrahydrodipicolinate + H2O + H(+). The protein operates within amino-acid biosynthesis; L-lysine biosynthesis via DAP pathway; (S)-tetrahydrodipicolinate from L-aspartate: step 3/4. Its function is as follows. Catalyzes the condensation of (S)-aspartate-beta-semialdehyde [(S)-ASA] and pyruvate to 4-hydroxy-tetrahydrodipicolinate (HTPA). The protein is 4-hydroxy-tetrahydrodipicolinate synthase of Thermotoga neapolitana (strain ATCC 49049 / DSM 4359 / NBRC 107923 / NS-E).